Here is a 450-residue protein sequence, read N- to C-terminus: Glutamyl-tRNA(Gln) amidotransferase subunit A, mitochondrial (450 aa).

Residues lysine 47 and serine 122 each act as charge relay system in the active site. The Acyl-ester intermediate role is filled by serine 146.

This sequence belongs to the amidase family. GatA subfamily. Subunit of the heterotrimeric GatFAB amidotransferase (AdT) complex, composed of A, B and F subunits.

It localises to the mitochondrion. The enzyme catalyses L-glutamyl-tRNA(Gln) + L-glutamine + ATP + H2O = L-glutaminyl-tRNA(Gln) + L-glutamate + ADP + phosphate + H(+). Its function is as follows. Allows the formation of correctly charged Gln-tRNA(Gln) through the transamidation of misacylated Glu-tRNA(Gln) in the mitochondria. The reaction takes place in the presence of glutamine and ATP through an activated gamma-phospho-Glu-tRNA(Gln). In Candida albicans (strain SC5314 / ATCC MYA-2876) (Yeast), this protein is Glutamyl-tRNA(Gln) amidotransferase subunit A, mitochondrial.